Reading from the N-terminus, the 146-residue chain is Hemoglobin subunit beta (146 aa).

The residue at position 1 (Thr-1) is a Blocked amino end (Thr). Residues 2 to 146 (HWTAEERHYI…VAHALTLQYH (145 aa)) form the Globin domain. Positions 63 and 92 each coordinate heme b.

This sequence belongs to the globin family. As to quaternary structure, heterotetramer of two alpha chains and two beta chains. Red blood cells.

Involved in oxygen transport from the lung to the various peripheral tissues. The sequence is that of Hemoglobin subunit beta (HBB) from Caretta caretta (Loggerhead sea turtle).